A 123-amino-acid chain; its full sequence is Putative membrane protein insertion efficiency factor (123 aa).

Belongs to the UPF0161 family.

Its subcellular location is the cell inner membrane. Its function is as follows. Could be involved in insertion of integral membrane proteins into the membrane. This Beijerinckia indica subsp. indica (strain ATCC 9039 / DSM 1715 / NCIMB 8712) protein is Putative membrane protein insertion efficiency factor.